The chain runs to 356 residues: Histidinol-phosphate aminotransferase (356 aa).

An N6-(pyridoxal phosphate)lysine modification is found at lysine 211.

The protein belongs to the class-II pyridoxal-phosphate-dependent aminotransferase family. Histidinol-phosphate aminotransferase subfamily. In terms of assembly, homodimer. Pyridoxal 5'-phosphate is required as a cofactor.

The catalysed reaction is L-histidinol phosphate + 2-oxoglutarate = 3-(imidazol-4-yl)-2-oxopropyl phosphate + L-glutamate. It participates in amino-acid biosynthesis; L-histidine biosynthesis; L-histidine from 5-phospho-alpha-D-ribose 1-diphosphate: step 7/9. The polypeptide is Histidinol-phosphate aminotransferase (Blochmanniella floridana).